A 283-amino-acid chain; its full sequence is uncharacterized protein (283 aa).

Residues 1-25 (MNKKRLLFRTPLDALFLLFGTALSA) form the signal peptide. C26 carries N-palmitoyl cysteine lipidation. C26 carries the S-diacylglycerol cysteine lipid modification.

Belongs to the MG439/MG440 family.

Its subcellular location is the cell membrane. This is an uncharacterized protein from Mycoplasma pneumoniae (strain ATCC 29342 / M129 / Subtype 1) (Mycoplasmoides pneumoniae).